The sequence spans 157 residues: Ubiquitin-like protein 4A (157 aa).

Positions 1 to 76 (MQLTVKALQG…LNLVVKPLEK (76 aa)) constitute a Ubiquitin-like domain. Lysine 48 participates in a covalent cross-link: Glycyl lysine isopeptide (Lys-Gly) (interchain with G-Cter in ubiquitin). A Phosphoserine modification is found at serine 90. Residues 96 to 138 (WQLISKVLARHFSAADASRVLEQLQRDYERSLSRLTLDDIERL) form a required and sufficient for interaction with BAG6 region.

Component of the BAG6/BAT3 complex, at least composed of BAG6, UBL4A and GET4/TRC35. Interacts with BAG6; the interaction is direct and required for UBL4A protein stability. Interacts with USP13; may be indirect via BAG6. In terms of processing, polyubiquitinated. Ubiquitination by AMFR and deubiquitination by USP13 may regulate the interaction between the BAG6/BAT3 complex and SGTA and therefore may regulate client proteins fate.

It localises to the cytoplasm. The protein resides in the cytosol. Its subcellular location is the nucleus. In terms of biological role, as part of a cytosolic protein quality control complex, the BAG6/BAT3 complex, maintains misfolded and hydrophobic patches-containing proteins in a soluble state and participates in their proper delivery to the endoplasmic reticulum or alternatively can promote their sorting to the proteasome where they undergo degradation. The BAG6/BAT3 complex is involved in the post-translational delivery of tail-anchored/type II transmembrane proteins to the endoplasmic reticulum membrane. Recruited to ribosomes, it interacts with the transmembrane region of newly synthesized tail-anchored proteins and together with SGTA and ASNA1 mediates their delivery to the endoplasmic reticulum. Client proteins that cannot be properly delivered to the endoplasmic reticulum are ubiquitinated and sorted to the proteasome. Similarly, the BAG6/BAT3 complex also functions as a sorting platform for proteins of the secretory pathway that are mislocalized to the cytosol either delivering them to the proteasome for degradation or to the endoplasmic reticulum. The BAG6/BAT3 complex also plays a role in the endoplasmic reticulum-associated degradation (ERAD), a quality control mechanism that eliminates unwanted proteins of the endoplasmic reticulum through their retrotranslocation to the cytosol and their targeting to the proteasome. It maintains these retrotranslocated proteins in an unfolded yet soluble state condition in the cytosol to ensure their proper delivery to the proteasome. The sequence is that of Ubiquitin-like protein 4A from Homo sapiens (Human).